Here is a 355-residue protein sequence, read N- to C-terminus: Protein RecA (355 aa).

72 to 79 contributes to the ATP binding site; it reads GPESSGKT.

Belongs to the RecA family.

Its subcellular location is the cytoplasm. In terms of biological role, can catalyze the hydrolysis of ATP in the presence of single-stranded DNA, the ATP-dependent uptake of single-stranded DNA by duplex DNA, and the ATP-dependent hybridization of homologous single-stranded DNAs. It interacts with LexA causing its activation and leading to its autocatalytic cleavage. The chain is Protein RecA from Wolbachia sp. subsp. Brugia malayi (strain TRS).